The sequence spans 301 residues: Probable enoyl-CoA hydratase 2, mitochondrial (301 aa).

The N-terminal 32 residues, 1–32 (MSFVKYLRRDNLLQLAGKPSLSRNYILQTCRT), are a transit peptide targeting the mitochondrion. Residues 105–109 (AGADL) and glycine 152 each bind substrate.

The protein belongs to the enoyl-CoA hydratase/isomerase family.

Its subcellular location is the mitochondrion. It carries out the reaction a (3S)-3-hydroxyacyl-CoA = a (2E)-enoyl-CoA + H2O. The enzyme catalyses a 4-saturated-(3S)-3-hydroxyacyl-CoA = a (3E)-enoyl-CoA + H2O. It participates in lipid metabolism; fatty acid beta-oxidation. In terms of biological role, straight-chain enoyl-CoA thioesters from C4 up to at least C16 are processed, although with decreasing catalytic rate. The polypeptide is Probable enoyl-CoA hydratase 2, mitochondrial (Arabidopsis thaliana (Mouse-ear cress)).